We begin with the raw amino-acid sequence, 920 residues long: MSASTNRRRLKDINTGAGENPSSGKKPLRSVTPLPISSKNSNPALQKSLSSKENPNPKLSHRSFGSTQKPVLRPVPRIDKSAVSGEGRVTRSTSSGLRGRSSSPSDLIRVFSDLRKRNESRVIGEKGESGQDKKSGLKSSGFKQGTSEIKVEPSSVCEKADEGSSCPVNSSKFEGSSVARNSISDPKAHALVGSGEKSTVALKSDSKIEKTGKGTSVALRRKSLDNVGKAMEMSKDIRGNEGSSNSTAKYPSKLHEKLAFLEGKVKKIASDIKKTKDMLDLNNPDSSKVIISDIHQKITGIEKSMSHVIDGPEKNKTTKAKSSVKGLNKEELEDRLLPHQRLLRSRTQSKTSSHVSKGHDSVESNKAVNAEEKPSAPVEENAIALEFLASLDKEKVTFMSDQNALENLEVQEMDTEEPSKENDVSKDVNLTSNLTEILRANEALEEIDDEENREEMELEEIDDGCMYQLNDIGSKTSTGGWFVSEGEAVILAHDDGSCSYYDVANSEFMVNECNSLSIWVRLYEVTGVFGFVHYVKSVYSPPDGISPNTWRDCWVVRAPGADGCSGRYVVAASAGNTLESGFCSWDFYTKDIKALHIEDGSSRVSRTALAPLPNNTSHGRNTPACAVVPETQQWWYRPCGPLIASTGSFQSIVKVFDIRDGEQIMKWGVQNPVSALDYSSPLQWRNRGKLVIAETEAISVWDVNSLHPEAQHTISSSGRKISAFHINNTDAEVGGGVRQRVSSLDAEGNDGVFCTSDSINILDFRNPSGIGAKIPKLGVNAQCVSSRGDSVFLGCTNQKSTVKKQMASSSQVQQFSIRKQRLVSTYSLPDSNSHPHHSAITQVWGNSNFVMATSGMGLFVFDTAKEETLQQQPLTSDYGSVQTVREIIGPNDMYCPSFDYSGCRVLLISRDRPALWRYLL.

Residues Met-1–Leu-10 are compositionally biased toward basic residues. 2 disordered regions span residues Met-1–Thr-199 and Ile-309–Ser-375. A compositionally biased stretch (polar residues) spans Pro-35 to Asn-54. Residues Thr-90 to Ser-105 show a composition bias toward low complexity. Over residues Ser-112–Ser-135 the composition is skewed to basic and acidic residues. 2 stretches are compositionally biased toward polar residues: residues Leu-137–Ser-147 and Cys-166–Ser-184. Residues Leu-327–Leu-337 are compositionally biased toward basic and acidic residues. Positions Ser-345 to Val-355 are enriched in polar residues. Residues Lys-357–Pro-374 show a composition bias toward basic and acidic residues. A coiled-coil region spans residues Thr-435–Asp-463.

In terms of assembly, interacts with KIN14B, CDKA-1, CKS1 and CKS2.

Its subcellular location is the cytoplasm. In terms of biological role, might be involved in division plane determination. The sequence is that of KIN14B-interacting protein At4g14310 from Arabidopsis thaliana (Mouse-ear cress).